Reading from the N-terminus, the 719-residue chain is Polyphosphate kinase (719 aa).

Residue Asn-47 coordinates ATP. Residues Arg-377 and Arg-407 each coordinate Mg(2+). His-437 functions as the Phosphohistidine intermediate in the catalytic mechanism. ATP contacts are provided by Tyr-470, Arg-566, and His-594.

The protein belongs to the polyphosphate kinase 1 (PPK1) family. Requires Mg(2+) as cofactor. An intermediate of this reaction is the autophosphorylated ppk in which a phosphate is covalently linked to a histidine residue through a N-P bond.

The enzyme catalyses [phosphate](n) + ATP = [phosphate](n+1) + ADP. In terms of biological role, catalyzes the reversible transfer of the terminal phosphate of ATP to form a long-chain polyphosphate (polyP). The chain is Polyphosphate kinase from Exiguobacterium sibiricum (strain DSM 17290 / CCUG 55495 / CIP 109462 / JCM 13490 / 255-15).